A 148-amino-acid chain; its full sequence is Large-conductance mechanosensitive channel (148 aa).

2 consecutive transmembrane segments (helical) span residues 15 to 35 (LDMAVGVILGASFGTIVKSLV) and 84 to 104 (VGVFANTVVSFTIVAFAVFLL).

This sequence belongs to the MscL family. Homopentamer.

The protein localises to the cell inner membrane. Channel that opens in response to stretch forces in the membrane lipid bilayer. May participate in the regulation of osmotic pressure changes within the cell. This Nitratidesulfovibrio vulgaris (strain DSM 19637 / Miyazaki F) (Desulfovibrio vulgaris) protein is Large-conductance mechanosensitive channel.